The following is a 70-amino-acid chain: Gas vesicle protein A (70 aa).

This sequence belongs to the gas vesicle GvpA family. The gas vesicle shell is 2 nm thick and consists of a single layer of this protein. It forms helical ribs nearly perpendicular to the long axis of the vesicle.

The protein localises to the gas vesicle shell. Gas vesicles are hollow, gas filled proteinaceous nanostructures found in some microorganisms. During planktonic growth they allow positioning of the organism at a favorable depth for light or nutrient acquisition. GvpA forms the protein shell. The chain is Gas vesicle protein A from Ancylobacter aquaticus.